A 114-amino-acid chain; its full sequence is Ribonuclease P protein component (114 aa).

Belongs to the RnpA family. In terms of assembly, consists of a catalytic RNA component (M1 or rnpB) and a protein subunit.

It catalyses the reaction Endonucleolytic cleavage of RNA, removing 5'-extranucleotides from tRNA precursor.. Functionally, RNaseP catalyzes the removal of the 5'-leader sequence from pre-tRNA to produce the mature 5'-terminus. It can also cleave other RNA substrates such as 4.5S RNA. The protein component plays an auxiliary but essential role in vivo by binding to the 5'-leader sequence and broadening the substrate specificity of the ribozyme. The protein is Ribonuclease P protein component of Buchnera aphidicola subsp. Baizongia pistaciae (strain Bp).